The primary structure comprises 295 residues: uncharacterized protein (295 aa).

This is an uncharacterized protein from Acanthamoeba polyphaga (Amoeba).